A 302-amino-acid chain; its full sequence is Calpain-1 catalytic subunit (302 aa).

Positions 1 to 114 are domain III; the sequence is RESGCSFVLA…KRAGTQELDD (114 aa). The linker stretch occupies residues 115–130; sequence QIQANLPDEQVLSAEE. A domain IV region spans residues 131 to 301; sequence IDENFKALFR…LFKWLQLTMF (171 aa). EF-hand domains are found at residues 173–206, 203–238, and 268–302; these read FSMESCRSMVNLMDRDGNGKLGLVEFNILWNRIR, NRIRNYLAIFRKFDLDKSGSMSAYEMRMAIESAGFK, and VRLETMFRFFKTLDTDLDGVVTFDLFKWLQLTMFA. Residues aspartate 186, aspartate 188, asparagine 190, lysine 192, glutamate 197, aspartate 216, aspartate 218, serine 220, serine 222, and glutamate 227 each contribute to the Ca(2+) site.

The protein belongs to the peptidase C2 family. In terms of assembly, forms a heterodimer with a small (regulatory) subunit CAPNS1. Ca(2+) is required as a cofactor. Post-translationally, the N-terminus is blocked. In terms of processing, undergoes calcium-induced successive autoproteolytic cleavages that generate a membrane-bound 78 kDa active form and an intracellular 75 kDa active form. Calpastatin reduces with high efficiency the transition from 78 kDa to 75 kDa calpain forms. As to expression, ubiquitous.

Its subcellular location is the cytoplasm. It is found in the cell membrane. The enzyme catalyses Broad endopeptidase specificity.. Activated by micromolar concentrations of calcium and inhibited by calpastatin. Its function is as follows. Calcium-regulated non-lysosomal thiol-protease which catalyzes limited proteolysis of substrates involved in cytoskeletal remodeling and signal transduction. Proteolytically cleaves CTBP1. Cleaves and activates caspase-7 (CASP7). This is Calpain-1 catalytic subunit from Oryctolagus cuniculus (Rabbit).